Consider the following 550-residue polypeptide: Eukaryotic translation initiation factor 3 subunit L (550 aa).

The interval 1–20 (MVRDSFDGGHTGDPERDLAY) is disordered. The 195-residue stretch at 309-503 (EATKIFVNCL…IDDSTTDLDF (195 aa)) folds into the PCI domain.

The protein belongs to the eIF-3 subunit L family. Component of the eukaryotic translation initiation factor 3 (eIF-3) complex.

Its subcellular location is the cytoplasm. Component of the eukaryotic translation initiation factor 3 (eIF-3) complex, which is involved in protein synthesis of a specialized repertoire of mRNAs and, together with other initiation factors, stimulates binding of mRNA and methionyl-tRNAi to the 40S ribosome. The eIF-3 complex specifically targets and initiates translation of a subset of mRNAs involved in cell proliferation. The chain is Eukaryotic translation initiation factor 3 subunit L from Brugia malayi (Filarial nematode worm).